The sequence spans 690 residues: Hypersensitivity response secretion protein HrcV (690 aa).

The next 6 helical transmembrane spans lie at 14 to 36 (IGIA…TMLI), 48 to 72 (VVLL…LLLF), 104 to 128 (LVVG…FIVI), 196 to 216 (AIAG…IGIT), 229 to 253 (FAVL…AAGV), and 291 to 315 (LLMG…LIFV).

The protein belongs to the FHIPEP (flagella/HR/invasion proteins export pore) family.

The protein resides in the cell inner membrane. In terms of biological role, involved in the secretion of PopA, a proteinaceous elicitor of the hypersensitivity response in plants. In Ralstonia nicotianae (strain ATCC BAA-1114 / GMI1000) (Ralstonia solanacearum), this protein is Hypersensitivity response secretion protein HrcV (hrcV).